The chain runs to 78 residues: Small ribosomal subunit protein bS18 (78 aa).

Belongs to the bacterial ribosomal protein bS18 family. As to quaternary structure, part of the 30S ribosomal subunit. Forms a tight heterodimer with protein bS6.

In terms of biological role, binds as a heterodimer with protein bS6 to the central domain of the 16S rRNA, where it helps stabilize the platform of the 30S subunit. This Kocuria rhizophila (strain ATCC 9341 / DSM 348 / NBRC 103217 / DC2201) protein is Small ribosomal subunit protein bS18.